The chain runs to 585 residues: S-antigen protein (585 aa).

A signal peptide spans 1-23; sequence MNRILSVTLCLFFIYLYIYKTYG. The segment at 51–585 is disordered; sequence NGKGQKYEDL…NSIINMLIGM (535 aa). Positions 59–85 are enriched in acidic residues; sequence DLEEEKEGENDDEEDSNSEESNNDEEN. Residues 96–113 are compositionally biased toward basic and acidic residues; sequence QETHGSEDEVSNGREDKV. 56 tandem repeats follow at residues 102–109, 110–117, 118–125, 126–133, 134–141, 142–149, 150–157, 158–165, 166–173, 174–181, 182–189, 190–197, 198–205, 206–213, 214–221, 222–229, 230–237, 238–245, 246–253, 254–261, 262–269, 270–277, 278–285, 286–293, 294–301, 302–309, 310–317, 318–325, 326–333, 334–341, 342–349, 350–357, 358–365, 366–373, 374–381, 382–389, 390–397, 398–405, 406–413, 414–421, 422–429, 430–437, 438–445, 446–453, 454–461, 462–469, 470–477, 478–485, 486–493, 494–501, 502–509, 510–517, 518–525, 526–533, 534–541, and 542–549. A 56 X 8 AA tandem repeats of E-D-[EK]-V-S-N-G-[RG] region spans residues 102-549; sequence EDEVSNGRED…GREDEVSNGR (448 aa). Residues 117–129 are compositionally biased toward acidic residues; it reads GEDEVSNGGEDEV. Composition is skewed to basic and acidic residues over residues 194 to 209 and 218 to 233; these read SNGR…EDKV. A compositionally biased stretch (basic and acidic residues) spans 274–297; it reads SNGREDKVSNGREDEVSNGREDKV. Residues 322-337 show a composition bias toward basic and acidic residues; sequence SNGREDKVSNGREDKV. Composition is skewed to basic and acidic residues over residues 362 to 393 and 402 to 417; these read SNGR…EDKV. The span at 442–465 shows a compositional bias: basic and acidic residues; that stretch reads SNGREDKVSNGREDKVSNGREDKV. Acidic residues predominate over residues 469–481; sequence GEDEVSNGGEDEV. Composition is skewed to basic and acidic residues over residues 530–553 and 560–569; these read SNGR…EDKG and ELSHNSESHT. Over residues 576-585 the composition is skewed to low complexity; the sequence is NSIINMLIGM.

The protein resides in the parasitophorous vacuole. In terms of biological role, s antigens are soluble heat-stable proteins present in the sera of some infected individuals. The polypeptide is S-antigen protein (Plasmodium falciparum (isolate 3D7)).